The primary structure comprises 159 residues: Small ribosomal subunit protein uS9 (159 aa).

This sequence belongs to the universal ribosomal protein uS9 family.

This is Small ribosomal subunit protein uS9 from Methylocella silvestris (strain DSM 15510 / CIP 108128 / LMG 27833 / NCIMB 13906 / BL2).